A 158-amino-acid polypeptide reads, in one-letter code: Transcription elongation factor GreA (158 aa).

The protein belongs to the GreA/GreB family.

Necessary for efficient RNA polymerase transcription elongation past template-encoded arresting sites. The arresting sites in DNA have the property of trapping a certain fraction of elongating RNA polymerases that pass through, resulting in locked ternary complexes. Cleavage of the nascent transcript by cleavage factors such as GreA or GreB allows the resumption of elongation from the new 3'terminus. GreA releases sequences of 2 to 3 nucleotides. The sequence is that of Transcription elongation factor GreA from Rhizobium leguminosarum bv. trifolii (strain WSM2304).